The primary structure comprises 497 residues: Zinc finger protein 3 (497 aa).

The span at 1 to 20 (MGTEKKEGLPKEETSEDSKP) shows a compositional bias: basic and acidic residues. A disordered region spans residues 1-53 (MGTEKKEGLPKEETSEDSKPHGQTVEKLAQEVCHGHEFGEASEEDMSEGHLRE). Residues Lys-6 and Lys-11 each participate in a glycyl lysine isopeptide (Lys-Gly) (interchain with G-Cter in SUMO2) cross-link. C2H2-type zinc fingers lie at residues 136 to 158 (HTCK…MRVH), 164 to 186 (FECK…QRIH), 192 to 214 (FACT…HRIH), 220 to 242 (YKCE…QRIH), 248 to 270 (YECN…QRIH), 276 to 298 (HECS…QKIH), 304 to 326 (YLCN…QRIH), 332 to 354 (YECS…IRIH), 360 to 382 (YVCK…ERIH), 388 to 410 (YECF…QRIH), 416 to 438 (HQCN…QKIH), 444 to 466 (YECS…QRIH), and 472 to 494 (YECQ…QSVH).

It belongs to the krueppel C2H2-type zinc-finger protein family.

The protein localises to the nucleus. Functionally, may be involved in transcriptional regulation. The sequence is that of Zinc finger protein 3 (Zfp3) from Mus musculus (Mouse).